A 192-amino-acid polypeptide reads, in one-letter code: MVDKEKIEIAVRMILEAIGEDPDREGLKDTPKRVARMYEEVFAGLSQDPSEHLERYFTEEHEEMVLVKDIPLYSMCEHHLLPFYGKAHVAYIPRKGKVTGLSKLARVVEGFAKRPQLQERLTSQIADAIMEKLNPRGVLVVIEAEHMCMTMRGVKKPGSKTITSAVRGIFATSVATRAEAMALIGHQSPLRD.

Zn(2+)-binding residues include C76, H79, and C148.

It belongs to the GTP cyclohydrolase I family. Toroid-shaped homodecamer, composed of two pentamers of five dimers.

It carries out the reaction GTP + H2O = 7,8-dihydroneopterin 3'-triphosphate + formate + H(+). Its pathway is cofactor biosynthesis; 7,8-dihydroneopterin triphosphate biosynthesis; 7,8-dihydroneopterin triphosphate from GTP: step 1/1. The protein is GTP cyclohydrolase 1 of Carboxydothermus hydrogenoformans (strain ATCC BAA-161 / DSM 6008 / Z-2901).